Reading from the N-terminus, the 356-residue chain is S-adenosylmethionine:tRNA ribosyltransferase-isomerase (356 aa).

The protein belongs to the QueA family. As to quaternary structure, monomer.

It is found in the cytoplasm. It carries out the reaction 7-aminomethyl-7-carbaguanosine(34) in tRNA + S-adenosyl-L-methionine = epoxyqueuosine(34) in tRNA + adenine + L-methionine + 2 H(+). It functions in the pathway tRNA modification; tRNA-queuosine biosynthesis. Functionally, transfers and isomerizes the ribose moiety from AdoMet to the 7-aminomethyl group of 7-deazaguanine (preQ1-tRNA) to give epoxyqueuosine (oQ-tRNA). The protein is S-adenosylmethionine:tRNA ribosyltransferase-isomerase of Escherichia coli (strain UTI89 / UPEC).